The following is a 276-amino-acid chain: Transmembrane protein 45B (276 aa).

The next 6 membrane-spanning stretches (helical) occupy residues 7 to 27 (HALP…KYPL), 48 to 68 (IIEA…EQFV), 95 to 115 (LFFA…HVPL), 147 to 167 (IHSL…VEVV), 181 to 201 (LLLL…PPFG), and 213 to 233 (IMFV…ILAA). Ser-271 and Ser-273 each carry phosphoserine.

It belongs to the TMEM45 family.

The protein resides in the endosome membrane. It localises to the lysosome membrane. It is found in the golgi apparatus. Its subcellular location is the trans-Golgi network membrane. Functionally, plays a role in innate immunity. The polypeptide is Transmembrane protein 45B (TMEM45B) (Bos taurus (Bovine)).